Reading from the N-terminus, the 345-residue chain is Protein RecA (345 aa).

65–72 is a binding site for ATP; the sequence is GPESSGKT.

This sequence belongs to the RecA family.

The protein resides in the cytoplasm. Functionally, can catalyze the hydrolysis of ATP in the presence of single-stranded DNA, the ATP-dependent uptake of single-stranded DNA by duplex DNA, and the ATP-dependent hybridization of homologous single-stranded DNAs. It interacts with LexA causing its activation and leading to its autocatalytic cleavage. The chain is Protein RecA from Hahella chejuensis (strain KCTC 2396).